The following is a 309-amino-acid chain: Elongation factor Ts (309 aa).

The interval threonine 80 to valine 83 is involved in Mg(2+) ion dislocation from EF-Tu.

It belongs to the EF-Ts family.

Its subcellular location is the cytoplasm. Functionally, associates with the EF-Tu.GDP complex and induces the exchange of GDP to GTP. It remains bound to the aminoacyl-tRNA.EF-Tu.GTP complex up to the GTP hydrolysis stage on the ribosome. This Rhodospirillum rubrum (strain ATCC 11170 / ATH 1.1.1 / DSM 467 / LMG 4362 / NCIMB 8255 / S1) protein is Elongation factor Ts.